A 211-amino-acid polypeptide reads, in one-letter code: Large ribosomal subunit protein bL25 (211 aa).

2 disordered regions span residues 1 to 23 (MAGE…AARQ) and 191 to 211 (LRSA…AEEV). Over residues 196–211 (NEADEEETEEATAEEV) the composition is skewed to acidic residues.

It belongs to the bacterial ribosomal protein bL25 family. CTC subfamily. As to quaternary structure, part of the 50S ribosomal subunit; part of the 5S rRNA/L5/L18/L25 subcomplex. Contacts the 5S rRNA. Binds to the 5S rRNA independently of L5 and L18.

This is one of the proteins that binds to the 5S RNA in the ribosome where it forms part of the central protuberance. This Dinoroseobacter shibae (strain DSM 16493 / NCIMB 14021 / DFL 12) protein is Large ribosomal subunit protein bL25.